The chain runs to 634 residues: Bacteriophytochrome (634 aa).

Cysteine 13 lines the biliverdin IXalpha pocket. A PAS 1 domain is found at 13–118; it reads CAREPIHIPG…YPQQWLVEME (106 aa). The tract at residues 13–514 is photosensory core domain; it reads CAREPIHIPG…ELMERKRFQQ (502 aa). One can recognise a GAF domain in the interval 151 to 305; sequence RVAKGLRSLI…VTDAVARTLA (155 aa). The interval 325–508 is phytochrome-specific (PHY); sequence TVREKLITDF…SLRVLIELME (184 aa). Residues 452–480 are tongue domain; the sequence is WAGNPQLAKLEDIPNSRLSPRKSFDLWQQ. A PAS 2 domain is found at 515–590; it reads DFTLLEASLS…ELLQDALRNG (76 aa). The tract at residues 515–634 is PAS9, output module, not required to bind biliverdin IX-alpha, required for dimerization; sequence DFTLLEASLS…HWLLQLRDPE (120 aa).

In the N-terminal section; belongs to the phytochrome family. Forms head-to-head homodimers. In terms of processing, contains one covalently linked biliverdin IX-alpha chromophore; present in the crystal structure as a mixture of Pr and Meta-R configurations.

Its function is as follows. Photoreceptor which exists in two forms that are reversibly interconvertible by light: far-red light (733 nm) converts protein to the red-absorbing (Pr) form, while red light (630 nm) partly converts the protein to the far-red-absorbing (Pfr) form. Regulates virulence of X.campestris pv. campestris on its host plants, perhaps by fine-tuning expression to ambient light levels and/or spatial cues. The Pr form may sense light and partially inhibit virulence; in the dark (Pfr form) biofilm and xanathan production rise and bacteria are more virulent. Strains overexpressing this protein have significantly decreased amounts of extracellular beta-1,4-endoglucanase, produce less xanthin and have decreased transcription of genes involved in virulence such as endoglucanases, type 2 secretion systems, xanthan production and flagellar-dependent motility. The chain is Bacteriophytochrome (bphP) from Xanthomonas campestris pv. campestris (strain 8004).